We begin with the raw amino-acid sequence, 225 residues long: UPF0758 protein Shal_0429 (225 aa).

An MPN domain is found at 102 to 224 (ILSDPDLTRD…IVSFAERGWI (123 aa)). Zn(2+)-binding residues include His-173, His-175, and Asp-186. Residues 173–186 (HNHPSGIAEPSTAD) carry the JAMM motif motif.

The protein belongs to the UPF0758 family.

The chain is UPF0758 protein Shal_0429 from Shewanella halifaxensis (strain HAW-EB4).